Here is a 421-residue protein sequence, read N- to C-terminus: UDP-N-acetylglucosamine 1-carboxyvinyltransferase (421 aa).

A phosphoenolpyruvate-binding site is contributed by 22 to 23 (KN). R93 contacts UDP-N-acetyl-alpha-D-glucosamine. C117 functions as the Proton donor in the catalytic mechanism. C117 carries the post-translational modification 2-(S-cysteinyl)pyruvic acid O-phosphothioketal. UDP-N-acetyl-alpha-D-glucosamine-binding positions include 122–126 (RPVDL), D308, and I330.

This sequence belongs to the EPSP synthase family. MurA subfamily.

It is found in the cytoplasm. It catalyses the reaction phosphoenolpyruvate + UDP-N-acetyl-alpha-D-glucosamine = UDP-N-acetyl-3-O-(1-carboxyvinyl)-alpha-D-glucosamine + phosphate. The protein operates within cell wall biogenesis; peptidoglycan biosynthesis. Functionally, cell wall formation. Adds enolpyruvyl to UDP-N-acetylglucosamine. The sequence is that of UDP-N-acetylglucosamine 1-carboxyvinyltransferase from Pseudomonas syringae pv. tomato (strain ATCC BAA-871 / DC3000).